The following is a 1462-amino-acid chain: FYVE, RhoGEF and PH domain-containing protein 5 (1462 aa).

Disordered stretches follow at residues 37-323, 492-512, 592-613, 670-718, 746-777, and 851-887; these read GRLP…SAEE, YVPE…APGI, SGSF…SSMV, HVDV…ASES, EDRS…YENI, and CPIS…THKV. A compositionally biased stretch (basic and acidic residues) spans 72–82; sequence PLREDEPKDEG. 2 stretches are compositionally biased toward acidic residues: residues 95 to 106 and 137 to 151; these read SAEEEEEREEGG and EGTD…EGCA. Over residues 161–177 the composition is skewed to basic and acidic residues; it reads SRSEEEEKLVQPHRECS. 2 stretches are compositionally biased toward acidic residues: residues 211–220 and 242–255; these read GEAEEDDEEG and MGQD…EPPE. Positions 592–611 are enriched in polar residues; the sequence is SGSFSQRNHLPSSGTSTPSS. Positions 676-685 are enriched in low complexity; sequence SSSRSSSESS. The segment covering 858-887 has biased composition (basic and acidic residues); the sequence is PKEDLTSDEEQRSSEEEDSASRDPSVTHKV. Residues 892-1084 enclose the DH domain; it reads RALVIAQELL…SKVTDRANDS (193 aa). One can recognise a PH 1 domain in the interval 1113-1207; it reads EFLKEGTLMK…WYGCLSRALP (95 aa). An FYVE-type zinc finger spans residues 1242–1301; it reads VTHVMMCMNCGCDFSLTLRRHHCHACGKIVCRNCSRNKYPLKYLKDRMAKVCDGCFGELK. Cys1248, Cys1251, Cys1264, Cys1267, Cys1272, Cys1275, Cys1293, and Cys1296 together coordinate Zn(2+). The 99-residue stretch at 1363 to 1461 folds into the PH 2 domain; the sequence is GSAISGYLSR…WIEAMEDASV (99 aa).

Expressed in endothelial cells (at protein level).

The protein localises to the cytoplasm. The protein resides in the cytoskeleton. It localises to the cell projection. It is found in the ruffle membrane. Its subcellular location is the endoplasmic reticulum. The protein localises to the golgi apparatus. The protein resides in the early endosome. In terms of biological role, activates CDC42, a member of the Ras-like family of Rho- and Rac proteins, by exchanging bound GDP for free GTP. Mediates VEGF-induced CDC42 activation. May regulate proangiogenic action of VEGF in vascular endothelial cells, including network formation, directional movement and proliferation. May play a role in regulating the actin cytoskeleton and cell shape. The chain is FYVE, RhoGEF and PH domain-containing protein 5 (FGD5) from Homo sapiens (Human).